The sequence spans 205 residues: ATP phosphoribosyltransferase (205 aa).

This sequence belongs to the ATP phosphoribosyltransferase family. Short subfamily. As to quaternary structure, heteromultimer composed of HisG and HisZ subunits.

The protein localises to the cytoplasm. The catalysed reaction is 1-(5-phospho-beta-D-ribosyl)-ATP + diphosphate = 5-phospho-alpha-D-ribose 1-diphosphate + ATP. It participates in amino-acid biosynthesis; L-histidine biosynthesis; L-histidine from 5-phospho-alpha-D-ribose 1-diphosphate: step 1/9. In terms of biological role, catalyzes the condensation of ATP and 5-phosphoribose 1-diphosphate to form N'-(5'-phosphoribosyl)-ATP (PR-ATP). Has a crucial role in the pathway because the rate of histidine biosynthesis seems to be controlled primarily by regulation of HisG enzymatic activity. The sequence is that of ATP phosphoribosyltransferase from Staphylococcus carnosus (strain TM300).